The primary structure comprises 464 residues: Methionine aminopeptidase 2-2 (464 aa).

A disordered region spans residues 1 to 106 (MGAKTYEGGD…PRVPLSQLFP (106 aa)). Acidic residues predominate over residues 37–53 (EDGDGEFGSDDDDDGGD). Residues 70 to 86 (PKKKKRSKKKKNNKKKS) are compositionally biased toward basic residues. His-216 lines the substrate pocket. The a divalent metal cation site is built by Asp-237, Asp-248, and His-317. Residue His-325 participates in substrate binding. A divalent metal cation-binding residues include Glu-350 and Glu-445.

This sequence belongs to the peptidase M24A family. Methionine aminopeptidase eukaryotic type 2 subfamily. Co(2+) serves as cofactor. Zn(2+) is required as a cofactor. The cofactor is Mn(2+). It depends on Fe(2+) as a cofactor.

It is found in the cytoplasm. It carries out the reaction Release of N-terminal amino acids, preferentially methionine, from peptides and arylamides.. In terms of biological role, cotranslationally removes the N-terminal methionine from nascent proteins. The N-terminal methionine is often cleaved when the second residue in the primary sequence is small and uncharged (Met-Ala-, Cys, Gly, Pro, Ser, Thr, or Val). This is Methionine aminopeptidase 2-2 from Talaromyces stipitatus (strain ATCC 10500 / CBS 375.48 / QM 6759 / NRRL 1006) (Penicillium stipitatum).